Here is a 315-residue protein sequence, read N- to C-terminus: Methionyl-tRNA formyltransferase (315 aa).

113 to 116 serves as a coordination point for (6S)-5,6,7,8-tetrahydrofolate; sequence SLLP.

This sequence belongs to the Fmt family.

The catalysed reaction is L-methionyl-tRNA(fMet) + (6R)-10-formyltetrahydrofolate = N-formyl-L-methionyl-tRNA(fMet) + (6S)-5,6,7,8-tetrahydrofolate + H(+). Its function is as follows. Attaches a formyl group to the free amino group of methionyl-tRNA(fMet). The formyl group appears to play a dual role in the initiator identity of N-formylmethionyl-tRNA by promoting its recognition by IF2 and preventing the misappropriation of this tRNA by the elongation apparatus. This is Methionyl-tRNA formyltransferase from Salmonella dublin (strain CT_02021853).